Here is a 204-residue protein sequence, read N- to C-terminus: Per os infectivity factor 3 (204 aa).

As to quaternary structure, forms the PIF complex together with PIF1 and PIF2. The complex also interacts with per os infectivity factor PIF0.

Functionally, per os factor that plays a role in the initiation of host midgut infection. Unlike PIF1 and PIF2, PIF3 is not involved in specific binding of occluded virions (ODV) to the host midgut target cells. The chain is Per os infectivity factor 3 (AC115) from Lepidoptera (butterflies and moths).